Consider the following 144-residue polypeptide: Phosphomevalonate dehydratase small subunit (144 aa).

The Proton acceptor role is filled by S65.

It belongs to the AcnX type II small subunit family. Heterodimer composed of a large subunit (PMDh-L) and a small subunit (PMDh-S).

It carries out the reaction (R)-5-phosphomevalonate = (2E)-3-methyl-5-phosphooxypent-2-enoate + H2O. Its pathway is isoprenoid biosynthesis; isopentenyl diphosphate biosynthesis via mevalonate pathway. Component of a hydro-lyase that catalyzes the dehydration of mevalonate 5-phosphate (MVA5P) to form trans-anhydromevalonate 5-phosphate (tAHMP). Involved in the archaeal mevalonate (MVA) pathway, which provides fundamental precursors for isoprenoid biosynthesis, such as isopentenyl diphosphate (IPP) and dimethylallyl diphosphate (DMAPP). The sequence is that of Phosphomevalonate dehydratase small subunit from Methanosarcina acetivorans (strain ATCC 35395 / DSM 2834 / JCM 12185 / C2A).